Here is a 608-residue protein sequence, read N- to C-terminus: 65-kDa microtubule-associated protein 6 (608 aa).

Coiled coils occupy residues 164 to 186, 368 to 388, and 467 to 503; these read DLTLRNLNEYQTHLRTLQKEKSD, ELLANIEMQINKIKDEAQSRK, and VRLVNILEDYKLTRKQQEEEKKRYRDQKKRQDLLLTQ. Residues 501–565 are disordered; it reads LTQRESIYGS…RSYSGHHRQN (65 aa). The segment covering 510-523 has biased composition (low complexity); that stretch reads SKPSPRRSSSFRKP. The residue at position 513 (S513) is a Phosphoserine. Over residues 526-535 the composition is skewed to polar residues; that stretch reads FNISNGNGSV. S604 is subject to Phosphoserine.

It belongs to the MAP65/ASE1 family. Forms a dimer. Binds to polymerized centrally located endocytic MT.

It localises to the nucleus. The protein localises to the cytoplasm. The protein resides in the mitochondrion. Its subcellular location is the cytoskeleton. It is found in the phragmoplast. In terms of biological role, microtubule-associated protein that mediates the formation of a mesh-like stable and dense network formed by individual microtubules (MT). Confers MT resistance to high concentration of NaCl. This chain is 65-kDa microtubule-associated protein 6 (MAP65-6), found in Arabidopsis thaliana (Mouse-ear cress).